The primary structure comprises 96 residues: DNA-directed RNA polymerase subunit Rpo11 (96 aa).

It belongs to the archaeal Rpo11/eukaryotic RPB11/RPC19 RNA polymerase subunit family. In terms of assembly, part of the RNA polymerase complex.

The protein resides in the cytoplasm. It carries out the reaction RNA(n) + a ribonucleoside 5'-triphosphate = RNA(n+1) + diphosphate. In terms of biological role, DNA-dependent RNA polymerase (RNAP) catalyzes the transcription of DNA into RNA using the four ribonucleoside triphosphates as substrates. In Methanococcus maripaludis (strain DSM 14266 / JCM 13030 / NBRC 101832 / S2 / LL), this protein is DNA-directed RNA polymerase subunit Rpo11.